A 294-amino-acid chain; its full sequence is Urease accessory protein UreD 1 (294 aa).

A disordered region spans residues 1 to 20 (MALSLDDLPEKPAPAEPVSA).

It belongs to the UreD family. In terms of assembly, ureD, UreF and UreG form a complex that acts as a GTP-hydrolysis-dependent molecular chaperone, activating the urease apoprotein by helping to assemble the nickel containing metallocenter of UreC. The UreE protein probably delivers the nickel.

It is found in the cytoplasm. In terms of biological role, required for maturation of urease via the functional incorporation of the urease nickel metallocenter. The protein is Urease accessory protein UreD 1 of Methylorubrum populi (strain ATCC BAA-705 / NCIMB 13946 / BJ001) (Methylobacterium populi).